We begin with the raw amino-acid sequence, 309 residues long: Taste receptor type 2 member 31 (309 aa).

The Extracellular segment spans residues 1–2 (MT). Residues 3-23 (TFIPIIFSSLVMVMFVTGNFA) traverse the membrane as a helical segment. Residues 24-55 (NGFIALVNSIESVKRQKISYADQILTALAVSR) lie on the Cytoplasmic side of the membrane. A helical membrane pass occupies residues 56 to 76 (IGLLWVLLLNWYSTVLNPAFY). Topologically, residues 77 to 100 (SVEVRTTAYNVWAVTGHFSNWLAT) are extracellular. A helical membrane pass occupies residues 101–121 (SLSIFYLLKIANFSNLIFLHL). The Cytoplasmic segment spans residues 122–126 (KRRVK). A helical transmembrane segment spans residues 127–147 (SVILVMLLGPLLFLACQLFVI). The Extracellular segment spans residues 148 to 181 (NMKEIVQTKEYEGNXTWKIKLRSAVYLSDATVTT). Residue asparagine 161 is glycosylated (N-linked (GlcNAc...) asparagine). The helical transmembrane segment at 182-202 (LGNLVPFTLTLLCFLLLICSL) threads the bilayer. Residues 203-229 (CKHLKKMQLHGKGSQDPSMKVHIKALQ) lie on the Cytoplasmic side of the membrane. Residues 230–250 (TVTSFLLLCAIYFLSIMISVW) form a helical membrane-spanning segment. The Extracellular segment spans residues 251 to 259 (SLGSLKNKP). Residues 260 to 280 (VFMFCKAMRFSYPSIHPFILI) traverse the membrane as a helical segment. The Cytoplasmic segment spans residues 281–309 (WGNKKLKQTFLSVLQQVRYWVKGEKPSSP).

It belongs to the G-protein coupled receptor T2R family.

Its subcellular location is the membrane. In terms of biological role, receptor that may play a role in the perception of bitterness and is gustducin-linked. May play a role in sensing the chemical composition of the gastrointestinal content. The activity of this receptor may stimulate alpha gustducin, mediate PLC-beta-2 activation and lead to the gating of TRPM5. The polypeptide is Taste receptor type 2 member 31 (TAS2R31) (Gorilla gorilla gorilla (Western lowland gorilla)).